Consider the following 124-residue polypeptide: Small ribosomal subunit protein uS12 (124 aa).

D89 carries the 3-methylthioaspartic acid modification.

Belongs to the universal ribosomal protein uS12 family. As to quaternary structure, part of the 30S ribosomal subunit. Contacts proteins S8 and S17. May interact with IF1 in the 30S initiation complex.

Its function is as follows. With S4 and S5 plays an important role in translational accuracy. Interacts with and stabilizes bases of the 16S rRNA that are involved in tRNA selection in the A site and with the mRNA backbone. Located at the interface of the 30S and 50S subunits, it traverses the body of the 30S subunit contacting proteins on the other side and probably holding the rRNA structure together. The combined cluster of proteins S8, S12 and S17 appears to hold together the shoulder and platform of the 30S subunit. This chain is Small ribosomal subunit protein uS12, found in Buchnera aphidicola subsp. Cinara cedri (strain Cc).